The sequence spans 289 residues: Bifunctional protein FolD 2 (289 aa).

Residues Gly162–Ser164, Ser187, and Ile228 each bind NADP(+).

This sequence belongs to the tetrahydrofolate dehydrogenase/cyclohydrolase family. Homodimer.

It catalyses the reaction (6R)-5,10-methylene-5,6,7,8-tetrahydrofolate + NADP(+) = (6R)-5,10-methenyltetrahydrofolate + NADPH. The enzyme catalyses (6R)-5,10-methenyltetrahydrofolate + H2O = (6R)-10-formyltetrahydrofolate + H(+). It functions in the pathway one-carbon metabolism; tetrahydrofolate interconversion. Functionally, catalyzes the oxidation of 5,10-methylenetetrahydrofolate to 5,10-methenyltetrahydrofolate and then the hydrolysis of 5,10-methenyltetrahydrofolate to 10-formyltetrahydrofolate. This is Bifunctional protein FolD 2 from Deinococcus geothermalis (strain DSM 11300 / CIP 105573 / AG-3a).